The primary structure comprises 95 residues: Integration host factor subunit beta (95 aa).

A disordered region spans residues 52-95; sequence SLHHRPPRVGRNPKTGESVHLPSRRVPHFKPGKELRDRVNSIKD. Positions 82–95 are enriched in basic and acidic residues; the sequence is PGKELRDRVNSIKD.

It belongs to the bacterial histone-like protein family. In terms of assembly, heterodimer of an alpha and a beta chain.

This protein is one of the two subunits of integration host factor, a specific DNA-binding protein that functions in genetic recombination as well as in transcriptional and translational control. The polypeptide is Integration host factor subunit beta (Methylococcus capsulatus (strain ATCC 33009 / NCIMB 11132 / Bath)).